The primary structure comprises 106 residues: Protein translation factor SUI1 homolog (106 aa).

Belongs to the SUI1 family.

In terms of biological role, additional factor that functions in concert with eIF-2 and the initiator tRNA in directing the ribosome to the proper start site of translation. The polypeptide is Protein translation factor SUI1 homolog (Acanthamoeba polyphaga mimivirus (APMV)).